The following is a 130-amino-acid chain: Small ribosomal subunit protein uS11 (130 aa).

It belongs to the universal ribosomal protein uS11 family. Part of the 30S ribosomal subunit. Interacts with proteins S7 and S18. Binds to IF-3.

In terms of biological role, located on the platform of the 30S subunit, it bridges several disparate RNA helices of the 16S rRNA. Forms part of the Shine-Dalgarno cleft in the 70S ribosome. The protein is Small ribosomal subunit protein uS11 of Syntrophus aciditrophicus (strain SB).